A 161-amino-acid polypeptide reads, in one-letter code: Ribonuclease H (161 aa).

An RNase H type-1 domain is found at 3–144; it reads VLKQLSIFTD…CDTLARVAAE (142 aa). Mg(2+) contacts are provided by Asp12, Glu50, Asp72, and Asp136.

The protein belongs to the RNase H family. As to quaternary structure, monomer. Requires Mg(2+) as cofactor.

It is found in the cytoplasm. It catalyses the reaction Endonucleolytic cleavage to 5'-phosphomonoester.. Endonuclease that specifically degrades the RNA of RNA-DNA hybrids. The sequence is that of Ribonuclease H from Shewanella woodyi (strain ATCC 51908 / MS32).